We begin with the raw amino-acid sequence, 92 residues long: Sec-independent protein translocase protein TatA (92 aa).

Residues 1–21 (MGIFDWKHWIVILVVVVLVFG) traverse the membrane as a helical segment. Residues 43–92 (MNDDEKPADPTVTPAQPVPPVQPQATAQANPPHTIDVQAQKVEEPIRKDV) are disordered. The segment covering 65–74 (PQATAQANPP) has biased composition (low complexity). Residues 83-92 (KVEEPIRKDV) are compositionally biased toward basic and acidic residues.

This sequence belongs to the TatA/E family. The Tat system comprises two distinct complexes: a TatABC complex, containing multiple copies of TatA, TatB and TatC subunits, and a separate TatA complex, containing only TatA subunits. Substrates initially bind to the TatABC complex, which probably triggers association of the separate TatA complex to form the active translocon.

Its subcellular location is the cell inner membrane. Part of the twin-arginine translocation (Tat) system that transports large folded proteins containing a characteristic twin-arginine motif in their signal peptide across membranes. TatA could form the protein-conducting channel of the Tat system. This is Sec-independent protein translocase protein TatA from Pseudomonas fluorescens (strain Pf0-1).